Reading from the N-terminus, the 850-residue chain is Trimethylamine-N-oxide reductase (850 aa).

Residues 1–39 (MKNKDSLHVSRRRFLAQLGGLTVAGMLGPSLLTPRSARA) constitute a signal peptide (tat-type signal). Mo-bis(molybdopterin guanine dinucleotide) is bound at residue Ser191.

It belongs to the prokaryotic molybdopterin-containing oxidoreductase family. Mo-bis(molybdopterin guanine dinucleotide) is required as a cofactor. In terms of processing, predicted to be exported by the Tat system. The position of the signal peptide cleavage has not been experimentally proven.

The protein resides in the periplasm. It catalyses the reaction trimethylamine + 2 Fe(III)-[cytochrome c] + H2O = trimethylamine N-oxide + 2 Fe(II)-[cytochrome c] + 3 H(+). Reduces trimethylamine-N-oxide (TMAO) into trimethylamine; an anaerobic reaction coupled to energy-yielding reactions. In Salmonella typhi, this protein is Trimethylamine-N-oxide reductase (torA).